A 447-amino-acid chain; its full sequence is GTPase Der (447 aa).

EngA-type G domains are found at residues 2 to 166 and 183 to 358; these read YRVA…PEYE and IKVA…NQSW. GTP contacts are provided by residues 8 to 15, 55 to 59, 118 to 121, 189 to 196, 236 to 240, and 301 to 304; these read GRPNVGKS, DTGGY, NKID, GKPNAGKS, and DTAGL. The KH-like domain maps to 359–443; it reads KRVGTGQLNR…PIKLLLRGKE (85 aa).

Belongs to the TRAFAC class TrmE-Era-EngA-EngB-Septin-like GTPase superfamily. EngA (Der) GTPase family. As to quaternary structure, associates with the 50S ribosomal subunit.

Functionally, GTPase that plays an essential role in the late steps of ribosome biogenesis. In Persephonella marina (strain DSM 14350 / EX-H1), this protein is GTPase Der.